The chain runs to 51 residues: Large ribosomal subunit protein eL39 (51 aa).

The protein belongs to the eukaryotic ribosomal protein eL39 family. In terms of assembly, interacts with YIH1.

This Kluyveromyces lactis (strain ATCC 8585 / CBS 2359 / DSM 70799 / NBRC 1267 / NRRL Y-1140 / WM37) (Yeast) protein is Large ribosomal subunit protein eL39 (RPL39).